The chain runs to 161 residues: RNA pyrophosphohydrolase (161 aa).

The 143-residue stretch at 12–154 (PYRPGVGMMI…KRKLYQAVVK (143 aa)) folds into the Nudix hydrolase domain. The Nudix box signature appears at 46–67 (GGIVPGETPSIAAMREMLEEIG).

It belongs to the Nudix hydrolase family. RppH subfamily. A divalent metal cation is required as a cofactor.

Functionally, accelerates the degradation of transcripts by removing pyrophosphate from the 5'-end of triphosphorylated RNA, leading to a more labile monophosphorylated state that can stimulate subsequent ribonuclease cleavage. The polypeptide is RNA pyrophosphohydrolase (Rickettsia typhi (strain ATCC VR-144 / Wilmington)).